We begin with the raw amino-acid sequence, 290 residues long: uncharacterized protein (290 aa).

This is an uncharacterized protein from Psittacid herpesvirus 1 (isolate Amazon parrot/-/97-0001/1997) (PsHV-1).